The chain runs to 416 residues: Gamma-glutamyl phosphate reductase (416 aa).

It belongs to the gamma-glutamyl phosphate reductase family.

Its subcellular location is the cytoplasm. The catalysed reaction is L-glutamate 5-semialdehyde + phosphate + NADP(+) = L-glutamyl 5-phosphate + NADPH + H(+). It functions in the pathway amino-acid biosynthesis; L-proline biosynthesis; L-glutamate 5-semialdehyde from L-glutamate: step 2/2. Its function is as follows. Catalyzes the NADPH-dependent reduction of L-glutamate 5-phosphate into L-glutamate 5-semialdehyde and phosphate. The product spontaneously undergoes cyclization to form 1-pyrroline-5-carboxylate. This is Gamma-glutamyl phosphate reductase from Streptococcus mutans serotype c (strain ATCC 700610 / UA159).